Reading from the N-terminus, the 304-residue chain is Probable intron-encoded endonuclease 1 (304 aa).

Residues 84 to 175 (DKGGIYSFIN…RFNFDNLYNF (92 aa)) form the GIY-YIG domain.

The protein to endonucleases of group I introns of fungi and phage.

Its subcellular location is the mitochondrion. Its function is as follows. Mitochondrial DNA endonuclease involved in intron homing. The protein is Probable intron-encoded endonuclease 1 of Neurospora crassa (strain ATCC 24698 / 74-OR23-1A / CBS 708.71 / DSM 1257 / FGSC 987).